The following is a 190-amino-acid chain: GTP cyclohydrolase 1 (190 aa).

The Zn(2+) site is built by Cys80, His83, and Cys151.

Belongs to the GTP cyclohydrolase I family. As to quaternary structure, toroid-shaped homodecamer, composed of two pentamers of five dimers.

The enzyme catalyses GTP + H2O = 7,8-dihydroneopterin 3'-triphosphate + formate + H(+). Its pathway is cofactor biosynthesis; 7,8-dihydroneopterin triphosphate biosynthesis; 7,8-dihydroneopterin triphosphate from GTP: step 1/1. The chain is GTP cyclohydrolase 1 from Rickettsia felis (strain ATCC VR-1525 / URRWXCal2) (Rickettsia azadi).